A 142-amino-acid chain; its full sequence is Deoxyuridine 5'-triphosphate nucleotidohydrolase (142 aa).

Substrate contacts are provided by residues 62–64, asparagine 75, 79–81, and lysine 89; these read RSG and TID.

It belongs to the dUTPase family. Requires Mg(2+) as cofactor.

It catalyses the reaction dUTP + H2O = dUMP + diphosphate + H(+). It functions in the pathway pyrimidine metabolism; dUMP biosynthesis; dUMP from dCTP (dUTP route): step 2/2. In terms of biological role, this enzyme is involved in nucleotide metabolism: it produces dUMP, the immediate precursor of thymidine nucleotides and it decreases the intracellular concentration of dUTP so that uracil cannot be incorporated into DNA. The sequence is that of Deoxyuridine 5'-triphosphate nucleotidohydrolase from Nautilia profundicola (strain ATCC BAA-1463 / DSM 18972 / AmH).